The primary structure comprises 342 residues: uncharacterized protein (342 aa).

The Zn(2+) site is built by Cys41, His63, Cys94, Cys97, Cys100, Cys108, and Glu149.

This sequence belongs to the zinc-containing alcohol dehydrogenase family. Requires Zn(2+) as cofactor.

This is an uncharacterized protein from Haemophilus influenzae (strain ATCC 51907 / DSM 11121 / KW20 / Rd).